The chain runs to 1004 residues: NADH:acrylate oxidoreductase (1004 aa).

Residue threonine 455 is modified to FMN phosphoryl threonine. Positions 508, 527, 535, 536, 540, 541, and 775 each coordinate FAD. Arginine 834 serves as the catalytic Proton donor. Residues histidine 941, glutamate 970, alanine 985, and leucine 986 each contribute to the FAD site.

It belongs to the FAD-dependent oxidoreductase 2 family. FRD/SDH subfamily. The cofactor is FAD. It depends on FMN as a cofactor. In terms of processing, is flavinylated on Thr-455 by ApbE, encoded in a neighboring gene. Flavinylation is essential for catalytic activity.

It carries out the reaction acrylate + NADH + H(+) = propanoate + NAD(+). Catalyzes the NADH-dependent reduction of acrylate to propanoate. The principal role of ARD in Vibrio seems to be the energy-saving detoxification of acrylate coming from the environment. May also use acrylate as the terminal electron acceptor for NADH regeneration at oxygen deficiency. NADPH cannot replace NADH as the electron donor. Is also able to reduce methacrylate in vitro, but with a much lower efficiency. In Vibrio harveyi (Beneckea harveyi), this protein is NADH:acrylate oxidoreductase.